Consider the following 163-residue polypeptide: Large ribosomal subunit protein uL13m (163 aa).

Residue S2 is modified to N-acetylserine. A propeptide spanning residues 2–4 (SQK) is cleaved from the precursor.

Belongs to the universal ribosomal protein uL13 family. In terms of assembly, component of the mitochondrial large ribosomal subunit (mt-LSU). Mature yeast 74S mitochondrial ribosomes consist of a small (37S) and a large (54S) subunit. The 37S small subunit contains a 15S ribosomal RNA (15S mt-rRNA) and 34 different proteins. The 54S large subunit contains a 21S rRNA (21S mt-rRNA) and 46 different proteins.

It is found in the mitochondrion. Component of the mitochondrial ribosome (mitoribosome), a dedicated translation machinery responsible for the synthesis of mitochondrial genome-encoded proteins, including at least some of the essential transmembrane subunits of the mitochondrial respiratory chain. The mitoribosomes are attached to the mitochondrial inner membrane and translation products are cotranslationally integrated into the membrane. The sequence is that of Large ribosomal subunit protein uL13m (MRPL23) from Saccharomyces cerevisiae (strain ATCC 204508 / S288c) (Baker's yeast).